Consider the following 194-residue polypeptide: Small ribosomal subunit protein eS7 (194 aa).

Belongs to the eukaryotic ribosomal protein eS7 family.

This Drosophila melanogaster (Fruit fly) protein is Small ribosomal subunit protein eS7 (RpS7).